We begin with the raw amino-acid sequence, 726 residues long: Dipeptidyl-peptidase 5 (726 aa).

An N-terminal signal peptide occupies residues 1–19; that stretch reads MAPAKWLIASLAFASTGLA. N-linked (GlcNAc...) asparagine glycosylation is found at Asn-96 and Asn-252. Residues 268-292 are disordered; it reads VAEPINKRNGPRTPHGIEGASSSPV. Residue Asn-485 is glycosylated (N-linked (GlcNAc...) asparagine). Residue Ser-558 is the Charge relay system of the active site. N-linked (GlcNAc...) asparagine glycosylation is present at Asn-605. Residues Asp-641 and His-673 each act as charge relay system in the active site. N-linked (GlcNAc...) asparagine glycosylation occurs at Asn-699.

This sequence belongs to the peptidase S9C family.

It localises to the secreted. Extracellular dipeptidyl-peptidase which removes N-terminal dipeptides sequentially from polypeptides having unsubstituted N-termini. Contributes to pathogenicity. The polypeptide is Dipeptidyl-peptidase 5 (DPP5) (Arthroderma otae (strain ATCC MYA-4605 / CBS 113480) (Microsporum canis)).